The primary structure comprises 101 residues: Apolipoprotein C-II (101 aa).

The signal sequence occupies residues 1 to 22; the sequence is MGTRYFLVGFLILLVLGFEAQG. Residues 66–74 form a lipid binding region; it reads TVDEKIRDI. The segment at 78–101 is lipoprotein lipase cofactor; that stretch reads STAAVTTYAGIITDQVFSILSGED.

The protein belongs to the apolipoprotein C2 family. In terms of processing, proapolipoprotein C-II is synthesized as a sialic acid containing glycoprotein which is subsequently desialylated prior to its proteolytic processing. Post-translationally, proapolipoprotein C-II, the major form found in plasma undergoes proteolytic cleavage of its N-terminal hexapeptide to generate apolipoprotein C-II, which occurs as the minor form in plasma.

The protein localises to the secreted. Its function is as follows. Component of chylomicrons, very low-density lipoproteins (VLDL), low-density lipoproteins (LDL), and high-density lipoproteins (HDL) in plasma. Plays an important role in lipoprotein metabolism as an activator of lipoprotein lipase. Both proapolipoprotein C-II and apolipoprotein C-II can activate lipoprotein lipase. The polypeptide is Apolipoprotein C-II (APOC2) (Capra hircus aegagrus (Wild goat)).